Here is a 309-residue protein sequence, read N- to C-terminus: Tumor necrosis factor ligand superfamily member 13B (309 aa).

The Cytoplasmic portion of the chain corresponds to 1 to 47 (MDESAKTLPPPCLCFCSEKGEDMKVGYDPITPQKEEGAWFGICRDGR). Residues 48-68 (LLAATLLLALLSSSFTAMSLY) form a helical; Signal-anchor for type II membrane protein membrane-spanning segment. Residues 69–309 (QLAALQADLM…DTFFGALKLL (241 aa)) lie on the Extracellular side of the membrane. The interval 110-140 (PAAPRPHNSSRGHRNRRAFQGPEETEQDVDL) is disordered. N-linked (GlcNAc...) asparagine glycosylation is found at N117 and N266. The segment covering 117–126 (NSSRGHRNRR) has biased composition (basic residues). One can recognise a THD domain in the interval 169–308 (DCLQLIADSD…DDTFFGALKL (140 aa)). The cysteines at positions 256 and 269 are disulfide-linked.

Belongs to the tumor necrosis factor family. Homotrimer. Isoform 2 heteromultimerizes with isoform 1, probably limiting the amount of functional isoform 1 on the cell surface. Post-translationally, the soluble form derives from the membrane form by proteolytic processing. In terms of processing, isoform 2 is not efficiently shed from the membrane unlike isoform 1. In terms of tissue distribution, isoform 2 is expressed in many myeloid cell lines.

It is found in the cell membrane. It localises to the secreted. In terms of biological role, cytokine that binds to TNFRSF13B/TACI and TNFRSF17/BCMA. TNFSF13/APRIL binds to the same 2 receptors. Together, they form a 2 ligands -2 receptors pathway involved in the stimulation of B- and T-cell function and the regulation of humoral immunity. A third B-cell specific BAFF-receptor (BAFFR/BR3) promotes the survival of mature B-cells and the B-cell response. Functionally, isoform 2 seems to inhibit isoform 1 secretion and bioactivity. This chain is Tumor necrosis factor ligand superfamily member 13B (Tnfsf13b), found in Mus musculus (Mouse).